A 365-amino-acid chain; its full sequence is 3-galactosyl-N-acetylglucosaminide 4-alpha-L-fucosyltransferase FUT3 (365 aa).

Residues 1 to 15 (MYPPGCAKVKCSWHH) lie on the Cytoplasmic side of the membrane. Residues 16 to 34 (CLPGLLLQLLLALCFFSYL) form a helical; Signal-anchor for type II membrane protein membrane-spanning segment. The Lumenal portion of the chain corresponds to 35–365 (RMSQEKPKPK…TVPSIASWFQ (331 aa)). 3 N-linked (GlcNAc...) asparagine glycosylation sites follow: N100, N158, and N189.

Belongs to the glycosyltransferase 10 family. Glycosylated. As to expression, liver, kidney, lung and brain.

It is found in the golgi apparatus. The protein resides in the golgi stack membrane. It carries out the reaction a beta-D-galactosyl-(1-&gt;3)-N-acetyl-beta-D-glucosaminyl derivative + GDP-beta-L-fucose = a beta-D-galactosyl-(1-&gt;3)-[alpha-L-fucosyl-(1-&gt;4)]-N-acetyl-beta-D-glucosaminyl derivative + GDP + H(+). It catalyses the reaction an N-acetyl-alpha-neuraminyl-(2-&gt;3)-beta-D-galactosyl-(1-&gt;4)-N-acetyl-beta-D-glucosaminyl derivative + GDP-beta-L-fucose = an alpha-Neu5Ac-(2-&gt;3)-beta-D-Gal-(1-&gt;4)-[alpha-L-Fuc-(1-&gt;3)]-beta-D-GlcNAc derivative + GDP + H(+). The catalysed reaction is a beta-D-galactosyl-(1-&gt;4)-N-acetyl-beta-D-glucosaminyl derivative + GDP-beta-L-fucose = a beta-D-galactosyl-(1-&gt;4)-[alpha-L-fucosyl-(1-&gt;3)]-N-acetyl-beta-D-glucosaminyl derivative + GDP + H(+). The enzyme catalyses an alpha-Neu5Ac-(2-&gt;3)-beta-D-Gal-(1-&gt;4)-beta-D-GlcNAc-(1-&gt;3)-beta-D-Gal-(1-&gt;4)-[alpha-L-Fuc-(1-&gt;3)]-beta-D-GlcNAc derivative + GDP-beta-L-fucose = an alpha-Neu5Ac-(2-&gt;3)-beta-D-Gal-(1-&gt;4)-[alpha-L-Fuc-(1-&gt;3)]-beta-D-GlcNAc-(1-&gt;3)-beta-D-Gal-(1-&gt;4)-[alpha-L-Fuc-(1-&gt;3)]-beta-D-GlcNAc derivative + GDP + H(+). It carries out the reaction Lc4Cer + GDP-beta-L-fucose = a lactoside III(4)-a-Fuc-Lc4Cer + GDP + H(+). It catalyses the reaction a beta-D-Gal-(1-&gt;3)-beta-D-GlcNAc-(1-&gt;3)-beta-D-Gal-(1-&gt;4)-beta-D-Glc-(1&lt;-&gt;1')-Cer(d18:1(4E)) + GDP-beta-L-fucose = a III(4)-a-Fuc-Lc4Cer(d18:1(4E)) + GDP + H(+). The catalysed reaction is N-acetyl-alpha-neuraminosyl-(2-&gt;3)-beta-D-galactosyl-(1-&gt;3)-[N-acetyl-alpha-neuraminosyl-(2-&gt;6)]-N-acetyl-beta-D-glucosaminyl-(1-&gt;3)-beta-D-galactosyl-(1-&gt;4)-beta-D-glucosyl-(1&lt;-&gt;1')-N-acyl-sphing-4-enine + GDP-beta-L-fucose = N-acetyl-alpha-neuraminosyl-(2-&gt;3)-beta-D-galactosyl-(1-&gt;3)-alpha-L-fucosyl-(1-&gt;4)-[N-acetyl-alpha-neuraminosyl-(2-&gt;6)-N-acetyl-beta-D-glucosaminyl-(1-&gt;3)]-beta-D-galactosyl-(1-&gt;4)-beta-D-glucosyl-(1&lt;-&gt;1')-N-acyl-sphing-4-enine + GDP + H(+). The enzyme catalyses N-acetyl-alpha-neuraminosyl-(2-&gt;3)-beta-D-galactosyl-(1-&gt;3)-N-acetyl-beta-D-glucosaminyl-(1-&gt;3)-beta-D-galactosyl-(1-&gt;4)-beta-D-glucosyl-(1&lt;-&gt;1')-N-acyl-sphing-4-enine + GDP-beta-L-fucose = N-acetyl-alpha-neuraminosyl-(2-&gt;3)-beta-D-galactosyl-(1-&gt;3)-alpha-L-fucosyl-(1-&gt;4)-[N-acetyl-beta-D-glucosaminyl-(1-&gt;3)]-beta-D-galactosyl-(1-&gt;4)-beta-D-glucosyl-(1&lt;-&gt;1')-N-acyl-sphing-4-enine + GDP + H(+). It carries out the reaction beta-D-galactosyl-(1-&gt;3)-N-acetyl-D-glucosamine + GDP-beta-L-fucose = beta-D-galactosyl-(1-&gt;3)-[alpha-L-fucosyl-(1-&gt;4)]-N-acetyl-D-glucosamine + GDP + H(+). It catalyses the reaction alpha-L-Fuc-(1-&gt;2)-beta-D-Gal-(1-&gt;3)-D-GlcNAc + GDP-beta-L-fucose = alpha-L-Fuc-(1-&gt;2)-beta-D-Gal-(1-&gt;3)-[alpha-L-Fuc-(1-&gt;4)]-D-GlcNAc + GDP + H(+). The catalysed reaction is alpha-L-Fuc-(1-&gt;2)-beta-D-Gal-(1-&gt;4)-D-GlcNAc + GDP-beta-L-fucose = alpha-L-Fuc-(1-&gt;2)-beta-D-Gal-(1-&gt;4)-[alpha-L-Fuc-(1-&gt;3)]-D-GlcNAc + GDP + H(+). The enzyme catalyses beta-D-galactosyl-(1-&gt;4)-N-acetyl-D-glucosamine + GDP-beta-L-fucose = beta-D-galactosyl-(1-&gt;4)-[alpha-L-fucosyl-(1-&gt;3)]-N-acetyl-D-glucosamine + GDP + H(+). It carries out the reaction lactose + GDP-beta-L-fucose = beta-D-galactosyl-(1-&gt;4)-[alpha-L-fucosyl-(1-&gt;3)]-D-glucose + GDP + H(+). It catalyses the reaction an alpha-Neu5Ac-(2-&gt;3)-beta-D-Gal-(1-&gt;3)-D-GlcNAc derivative + GDP-beta-L-fucose = an alpha-Neu5Ac-(2-&gt;3)-beta-D-Gal-(1-&gt;3)-[alpha-L-Fuc-(1-&gt;4)]-beta-D-GlcNAc derivative + GDP + H(+). It functions in the pathway protein modification; protein glycosylation. Functionally, catalyzes the transfer of L-fucose, from a guanosine diphosphate-beta-L-fucose, to both the subterminal N-acetyl glucosamine (GlcNAc) of type 1 chain (beta-D-Gal-(1-&gt;3)-beta-D-GlcNAc) glycolipids and oligosaccharides via an alpha(1,4) linkage, and the subterminal glucose (Glc) or GlcNAc of type 2 chain (beta-D-Gal-(1-&gt;4)-beta-D-GlcNAc) oligosaccharides via an alpha(1,3) linkage, independently of the presence of terminal alpha-L-fucosyl-(1,2) moieties on the terminal galactose of these acceptors and participates in the blood groups Lewis determination and expression of Lewis a (Le(a)), lewis b (Le(b)), Lewis x/SSEA-1 (Le(x)) and lewis y (Le(y)) antigens. Also catalyzes the transfer of L-fucose to subterminal GlcNAc of sialyl- and disialyl-lactotetraosylceramide to produce sialyl Lewis a (sLe(a)) and disialyl Lewis a via an alpha(1,4) linkage and therefore may regulate cell surface sialyl Lewis a expression and consequently regulates adhesive properties to E-selectin, cell proliferation and migration. Catalyzes the transfer of an L-fucose to 3'-sialyl-N-acetyllactosamine by an alpha(1,3) linkage, which allows the formation of sialyl-Lewis x structure and therefore may regulate the sialyl-Lewis x surface antigen expression and consequently adhesive properties to E-selectin. Prefers type 1 chain over type 2 acceptors. Type 1 tetrasaccharide is a better acceptor than type 1 disaccharide suggesting that a beta anomeric configuration of GlcNAc in the substrate is preferred. Lewis-positive (Le(+)) individuals have an active enzyme while Lewis-negative (Le(-)) individuals have an inactive enzyme. This Bos taurus (Bovine) protein is 3-galactosyl-N-acetylglucosaminide 4-alpha-L-fucosyltransferase FUT3.